The primary structure comprises 742 residues: Zinc finger protein 700 (742 aa).

The segment at Met1–Glu20 is disordered. Basic and acidic residues predominate over residues Ser8–Glu20. Positions Val24–Phe104 constitute a KRAB domain. 9 consecutive C2H2-type zinc fingers follow at residues Tyr194 to His216, Tyr222 to His244, Tyr250 to His272, Tyr278 to His300, Tyr306 to His328, Tyr362 to His384, Tyr390 to His412, Tyr418 to His440, and Tyr446 to His468. A C2H2-type 10; degenerate zinc finger spans residues Tyr474 to Pro502. 8 consecutive C2H2-type zinc fingers follow at residues Tyr508–His530, Tyr536–His558, Tyr564–His586, Tyr592–His614, Tyr620–His642, Tyr648–His670, Tyr676–His698, and Tyr704–His726.

It belongs to the krueppel C2H2-type zinc-finger protein family.

Its subcellular location is the nucleus. Functionally, may be involved in transcriptional regulation. In Homo sapiens (Human), this protein is Zinc finger protein 700 (ZNF700).